The primary structure comprises 111 residues: Parvalbumin alpha (111 aa).

At Thr1 the chain carries N-acetylthreonine; in form C2. EF-hand domains follow at residues 40–75 (KPDDTLKEVFGILDQDKSGYIEEEELKFVLKGFAAG) and 79–111 (LTANETKALLKAGDQDGDDKIGVDEFTNLVKAA). Ca(2+)-binding residues include Asp53, Asp55, Ser57, Tyr59, Glu61, Glu64, Asp92, Asp94, Asp96, Lys98, and Glu103.

This sequence belongs to the parvalbumin family. In terms of processing, acetylation of Thr-1 converts C1 to C2.

Functionally, in muscle, parvalbumin is thought to be involved in relaxation after contraction. It binds two calcium ions. This Latimeria chalumnae (Coelacanth) protein is Parvalbumin alpha.